Reading from the N-terminus, the 302-residue chain is Pathogenicity locus probable regulatory protein HrpS (302 aa).

The Sigma-54 factor interaction domain maps to 9-237 (DDLDAERVPN…LKAAAKRHVL (229 aa)). ATP-binding positions include 37-44 (GETGTGKD) and 99-108 (AQGGTLYLDE). Residues 279–298 (IDAASLELDIPRRTLYRRIK) constitute a DNA-binding region (H-T-H motif).

In terms of biological role, regulates the activation of the sigma factor HrpL which itself induces the expression of hprD as well as other hrp loci which are involved in plant pathogenicity, hrmA and avr genes. Probably interacts with sigma-54. The protein is Pathogenicity locus probable regulatory protein HrpS (hrpS) of Pseudomonas syringae pv. syringae.